Consider the following 605-residue polypeptide: Endonuclease 8-like 3 (605 aa).

The Schiff-base intermediate with DNA; via amino nitrogen role is filled by V2. Residues N192 and R271 each contribute to the DNA site. The FPG-type zinc-finger motif lies at 247-281; it reads KVYKRPNCGQCHCRITVCRFGDNNRMTYFCPHCQK. The segment at 317-346 adopts a RanBP2-type zinc-finger fold; that stretch reads SEEHWTCVVCTLINKPSSKACDACLTSRPI. S450 carries the post-translational modification Phosphoserine. A disordered region spans residues 456–477; that stretch reads ESKLFSPAHKKPKTAQYSSPEL. Positions 507, 510, 533, 541, 554, 556, 579, and 587 each coordinate Zn(2+). GRF-type zinc fingers lie at residues 507-550 and 554-596; these read CSKH…ADLS and CNHG…AENG.

The protein belongs to the FPG family. As to expression, expressed in keratinocytes and embryonic fibroblasts (at protein level). Also detected in thymus, testis and fetal lung primary fibroblasts.

The protein resides in the nucleus. It is found in the chromosome. It carries out the reaction 2'-deoxyribonucleotide-(2'-deoxyribose 5'-phosphate)-2'-deoxyribonucleotide-DNA = a 3'-end 2'-deoxyribonucleotide-(2,3-dehydro-2,3-deoxyribose 5'-phosphate)-DNA + a 5'-end 5'-phospho-2'-deoxyribonucleoside-DNA + H(+). DNA glycosylase which prefers single-stranded DNA (ssDNA), or partially ssDNA structures such as bubble and fork structures, to double-stranded DNA (dsDNA). Mediates interstrand cross-link repair in response to replication stress: acts by mediating DNA glycosylase activity, cleaving one of the two N-glycosyl bonds comprising the interstrand cross-link, which avoids the formation of a double-strand break but generates an abasic site that is bypassed by translesion synthesis polymerases. In vitro, displays strong glycosylase activity towards the hydantoin lesions spiroiminodihydantoin (Sp) and guanidinohydantoin (Gh) in both ssDNA and dsDNA; also recognizes FapyA, FapyG, 5-OHU, 5-OHC, 5-OHMH, Tg and 8-oxoA lesions in ssDNA. No activity on 8-oxoG detected. Also shows weak DNA-(apurinic or apyrimidinic site) lyase activity. In vivo, appears to be the primary enzyme involved in removing Sp and Gh from ssDNA in neonatal tissues. The chain is Endonuclease 8-like 3 (NEIL3) from Homo sapiens (Human).